We begin with the raw amino-acid sequence, 365 residues long: MEELCAALAGGVALAAPNSPAAPHPRLSAYKGRGDRLGQAERRRRLLCLQRERRLDYVNHARRLAEGDWAGVESDEDGGEDGDGEEEMEVDAGRRLPKRYANQLMLSEWLVDVPVDLEQEWIVVVCPVGKRALVVASRGSTAAYTKSGFCVNRFPSLLPGGNRHNTMNEKVYCILDCIYNEAEQTYYILDVMCWRGHPVYDCQTDFRFFWLSSKIQEEEGLGEKSRINPYKFVGLQNFPCTSESLCEVLTTNFPFEVDGLLFYHKQTHYTPGSTPLVGWLRPYMVPDILGLTVPATPLTAKPDYAGRQLQQIIESKRSKKLAAGKAQPSAEAAARNGHYELEHLSTPQPANSAQGQEEAGSQMEN.

In terms of domain architecture, IBB spans 10-72 (GGVALAAPNS…RLAEGDWAGV (63 aa)). 2 disordered regions span residues 15–34 (AAPNSPAAPHPRLSAYKGRG) and 69–90 (WAGVESDEDGGEDGDGEEEMEV). Over residues 73-90 (ESDEDGGEDGDGEEEMEV) the composition is skewed to acidic residues. Residues 129–131 (GKR) are interaction with m3G-cap structure. The tract at residues 211 to 333 (LSSKIQEEEG…GKAQPSAEAA (123 aa)) is necessary for binding to the m3G-cap structure. Residues 317-365 (RSKKLAAGKAQPSAEAAARNGHYELEHLSTPQPANSAQGQEEAGSQMEN) are disordered. The span at 345–355 (STPQPANSAQG) shows a compositional bias: polar residues.

It belongs to the snurportin family.

Its subcellular location is the nucleus. The protein resides in the cytoplasm. Its function is as follows. Functions as an U snRNP-specific nuclear import adapter. Involved in the trimethylguanosine (m3G)-cap-dependent nuclear import of U snRNPs. Binds specifically to the terminal m3G-cap U snRNAs. The polypeptide is Snurportin-1 (SNUPN) (Gallus gallus (Chicken)).